Consider the following 90-residue polypeptide: Interferon alpha-inducible protein 27-like protein 2A (90 aa).

The N-terminal stretch at 1 to 24 (MLGTLFGSAIGGALAVAGAPVALA) is a signal peptide. The next 2 membrane-spanning stretches (helical) occupy residues 28–48 (FTGT…AAAI) and 67–89 (GVLG…VGAL).

The protein belongs to the IFI6/IFI27 family. As to quaternary structure, homodimer. Interacts with SKP2. Interacts with NR4A1. May interact with BCL2.

The protein resides in the nucleus inner membrane. Its function is as follows. May be involved in the interferon-induced negative regulation of the transcriptional activity of NR4A1, NR4A2 and NR4A3 through the enhancement of XPO1-mediated nuclear export of these nuclear receptors. Through the regulation of NR4A1 transcriptional activity, may play a role in the vascular response to injury. The polypeptide is Interferon alpha-inducible protein 27-like protein 2A (Mus musculus (Mouse)).